The chain runs to 262 residues: Tryptophan synthase alpha chain (262 aa).

Active-site proton acceptor residues include Glu47 and Asp58.

It belongs to the TrpA family. Tetramer of two alpha and two beta chains.

The enzyme catalyses (1S,2R)-1-C-(indol-3-yl)glycerol 3-phosphate + L-serine = D-glyceraldehyde 3-phosphate + L-tryptophan + H2O. It functions in the pathway amino-acid biosynthesis; L-tryptophan biosynthesis; L-tryptophan from chorismate: step 5/5. In terms of biological role, the alpha subunit is responsible for the aldol cleavage of indoleglycerol phosphate to indole and glyceraldehyde 3-phosphate. This is Tryptophan synthase alpha chain from Chromobacterium violaceum (strain ATCC 12472 / DSM 30191 / JCM 1249 / CCUG 213 / NBRC 12614 / NCIMB 9131 / NCTC 9757 / MK).